The primary structure comprises 1951 residues: [F-actin]-monooxygenase MICAL2 (1951 aa).

The interval 2–494 (GENEDEKQAQ…KHLYITKEMD (493 aa)) is monooxygenase domain. FAD-binding positions include Cys-97, 116–118 (EKR), 123–125 (RNN), Phe-183, Tyr-298, and Asp-398. Residues 516-619 (DIRPNKLLTW…MVMYLSKFYE (104 aa)) form the Calponin-homology (CH) domain. A Phosphoserine modification is found at Ser-631. A Nuclear localization signal motif is present at residues 660–681 (RKRTPRVDTQTEENDMNKRRRQ). Disordered stretches follow at residues 663-712 (TPRV…SQNK) and 891-921 (KRVPHAHPPSPPSCLPSPHPAAASSPPAADS). The segment covering 691 to 700 (SFSSRSLGSS) has biased composition (low complexity). The span at 896–909 (AHPPSPPSCLPSPH) shows a compositional bias: pro residues. Low complexity predominate over residues 910–921 (PAAASSPPAADS). Positions 991-1053 (DTCYFCKKRV…KPHFVHCKTS (63 aa)) constitute an LIM zinc-binding domain. Cys-993, Cys-996, His-1014, Cys-1017, Cys-1020, Cys-1023, Cys-1043, and His-1046 together coordinate Zn(2+). Thr-1052 bears the Phosphoserine mark. Disordered regions lie at residues 1054–1141 (SKQR…RISP), 1158–1314 (TSED…VSPT), 1348–1368 (VEPGRESLRSPEEISSSEGCQ), 1383–1427 (ILGK…RKLG), 1451–1476 (HKTGEQLSQESAENIRGGSLKPTCSS), 1489–1580 (QKKA…AKKA), 1594–1624 (AQASDLSLPNSILRSRSLPSRPSKMFFSTTP), 1678–1697 (GDFFNSPKEEGPPGNRVPSL), 1706–1731 (STSMGQVAHPSSTGQDARKLEGGEGG), and 1747–1766 (PVTEATSSPTSSSAEEEADS). Residues 1061-1070 (AELNQQREEE) show a composition bias toward basic and acidic residues. Polar residues-rich tracts occupy residues 1129 to 1138 (PRPSEWTSVR), 1228 to 1239 (HSLQSPTPSKYQ), and 1246 to 1256 (QSNSTPMNQRA). Residues 1257 to 1268 (PSPPKEPPPPPS) show a composition bias toward pro residues. The segment covering 1269–1285 (LSSSSSLPSSFSSASVP) has biased composition (low complexity). The span at 1291-1306 (DSSSPQVTYNLHSPQI) shows a compositional bias: polar residues. Residues 1314-1353 (TPIYLRRARAQGIVKEIPLYLPHSPMLESTEDCLVEPGRE) form an interaction with MAPK1 region. The span at 1350–1359 (PGRESLRSPE) shows a compositional bias: basic and acidic residues. Over residues 1532–1545 (EAGKKTSPKPESKT) the composition is skewed to basic and acidic residues. Residues 1599-1616 (LSLPNSILRSRSLPSRPS) are compositionally biased toward low complexity. Residues 1678–1688 (GDFFNSPKEEG) are compositionally biased toward basic and acidic residues. Ser-1683 carries the post-translational modification Phosphoserine. Residues 1706–1720 (STSMGQVAHPSSTGQ) are compositionally biased toward polar residues. Residues 1749-1759 (TEATSSPTSSS) are compositionally biased toward low complexity. One can recognise a bMERB domain in the interval 1789 to 1939 (KQEELKRLHK…ERTQDQHFEN (151 aa)).

It belongs to the Mical family. In terms of assembly, interacts with PLXNA4. Interacts with RAB1B. Interacts with MAPK1/ERK2. Interacts with RAB1B, RAB35, RAB8A, RAB10, RAB13 and RAB15 (in their GTP-bound forms); binding to RAB1B and RAB35 is of low affinity compared to other Rab proteins; binding to RAB1B and RAB35 is of low affinity compared to other Rab proteins; at least in case of RAB8A may bind 2 molecules of RAB8A simultaneously through a high and a low affinity binding site, respectively. FAD is required as a cofactor. In terms of tissue distribution, expressed only in testis (at protein level).

The protein resides in the cytoplasm. Its subcellular location is the nucleus. The catalysed reaction is L-methionyl-[F-actin] + NADPH + O2 + H(+) = L-methionyl-(R)-S-oxide-[F-actin] + NADP(+) + H2O. Methionine monooxygenase that promotes depolymerization of F-actin by mediating oxidation of residues 'Met-44' and 'Met-47' on actin to form methionine-sulfoxide, resulting in actin filament disassembly and preventing repolymerization. Regulates the disassembly of branched actin networks also by oxidizing ARP3B-containing ARP2/3 complexes leading to ARP3B dissociation from the network. Acts as a key regulator of the SRF signaling pathway elicited by nerve growth factor and serum: mediates oxidation and subsequent depolymerization of nuclear actin, leading to increase MKL1/MRTF-A presence in the nucleus and promote SRF:MKL1/MRTF-A-dependent gene transcription. Does not activate SRF:MKL1/MRTF-A through RhoA. The chain is [F-actin]-monooxygenase MICAL2 from Mus musculus (Mouse).